Here is a 288-residue protein sequence, read N- to C-terminus: tRNA pseudouridine synthase B (288 aa).

Catalysis depends on Asp38, which acts as the Nucleophile.

This sequence belongs to the pseudouridine synthase TruB family. Type 1 subfamily.

It carries out the reaction uridine(55) in tRNA = pseudouridine(55) in tRNA. Responsible for synthesis of pseudouridine from uracil-55 in the psi GC loop of transfer RNAs. This chain is tRNA pseudouridine synthase B, found in Carboxydothermus hydrogenoformans (strain ATCC BAA-161 / DSM 6008 / Z-2901).